Reading from the N-terminus, the 168-residue chain is Protein archease (168 aa).

Ala2 bears the N-acetylalanine mark. Residues Asp39, Asp167, and Ile168 each coordinate Ca(2+).

Belongs to the archease family. Component of the tRNA-splicing ligase complex.

Component of the tRNA-splicing ligase complex required to facilitate the enzymatic turnover of catalytic subunit RTCB. Together with DDX1, acts by facilitating the guanylylation of RTCB, a key intermediate step in tRNA ligation. The polypeptide is Protein archease (Zbtb8os) (Mus musculus (Mouse)).